A 355-amino-acid chain; its full sequence is MKIVADENLAFTDYFFSEFGDIQYKAGRTLTHTDVQDAEALLVRSVTAVNESLIQNTALKYVGSATIGTDHLDIQALEKQGITWANAAGCNAQAVAEYVITALLHLDASLLEQQEKFTLGIVGLGNVGKRLAYMAQLLGWKVIGFDPYVQLDSIENVSFQTLLQQANAVSIHVPLTKKGEHATYHLFDEKAFAALQPNTILINSARGPVVKEAALIEDIQRTQRKVVLDVFEHEPVISEELLNMLALATPHIAGYSLEGKARGTQMIYEAFCQKFGYDINKRFETQLPACEDYFSGHDLKAVLKQKLSQIYDIAQDDANIRACVKEGKVEQKAFDLLRKNYPLRREWAAHGGPQA.

Residues Ser45 and Thr66 each contribute to the substrate site. Residue Asp146 coordinates NAD(+). Arg206 is an active-site residue. Asp229 lines the NAD(+) pocket. The active site involves Glu234. His251 serves as the catalytic Proton donor. NAD(+) is bound at residue Gly254. Tyr255 serves as a coordination point for substrate.

It belongs to the D-isomer specific 2-hydroxyacid dehydrogenase family. PdxB subfamily. In terms of assembly, homodimer.

It is found in the cytoplasm. The enzyme catalyses 4-phospho-D-erythronate + NAD(+) = (R)-3-hydroxy-2-oxo-4-phosphooxybutanoate + NADH + H(+). It participates in cofactor biosynthesis; pyridoxine 5'-phosphate biosynthesis; pyridoxine 5'-phosphate from D-erythrose 4-phosphate: step 2/5. Its function is as follows. Catalyzes the oxidation of erythronate-4-phosphate to 3-hydroxy-2-oxo-4-phosphonooxybutanoate. The protein is Erythronate-4-phosphate dehydrogenase of Acinetobacter baumannii (strain ACICU).